The chain runs to 487 residues: Probable cytochrome P450 313a5 (487 aa).

A Phosphotyrosine modification is found at tyrosine 223. Position 433 (cysteine 433) interacts with heme.

It belongs to the cytochrome P450 family. Requires heme as cofactor.

The protein localises to the endoplasmic reticulum membrane. It localises to the microsome membrane. May be involved in the metabolism of insect hormones and in the breakdown of synthetic insecticides. The protein is Probable cytochrome P450 313a5 (Cyp313a5) of Drosophila melanogaster (Fruit fly).